We begin with the raw amino-acid sequence, 208 residues long: MAKVLYITAHPFNELVSNSMAAGKAFIETYQQQHPDDEVKHIDLFETYIPVIDKDVLTGWGKMSNGETLTDDEQMKVSRLSDILEEFLSADKYVFVTPMWNLSFPPVVKAYIDAISIAGKTFKYSAEGPQGLLTDKKVLHIQSRGGYYTEGPAANFEMGDRYLRTIMTFLGVPSYETIIIEGHNAEPHKTEEIKATSINNAEKLATTF.

FMN is bound by residues Ser-17 to Ser-19, Met-99 to Leu-102, and Ser-143 to Gly-146.

This sequence belongs to the azoreductase type 1 family. As to quaternary structure, homodimer. It depends on FMN as a cofactor.

The catalysed reaction is 2 a quinone + NADH + H(+) = 2 a 1,4-benzosemiquinone + NAD(+). The enzyme catalyses N,N-dimethyl-1,4-phenylenediamine + anthranilate + 2 NAD(+) = 2-(4-dimethylaminophenyl)diazenylbenzoate + 2 NADH + 2 H(+). Functionally, quinone reductase that provides resistance to thiol-specific stress caused by electrophilic quinones. Its function is as follows. Also exhibits azoreductase activity. Catalyzes the reductive cleavage of the azo bond in aromatic azo compounds to the corresponding amines. In Staphylococcus aureus (strain bovine RF122 / ET3-1), this protein is FMN-dependent NADH:quinone oxidoreductase.